The following is a 297-amino-acid chain: AKT-interacting protein (297 aa).

Positions 1–13 (MNLNPFWSMSTNT) are enriched in polar residues. Residues 1-45 (MNLNPFWSMSTNTGRKRSDGEEQSGEQQQQQRASPARPSFGKKQL) are disordered. Low complexity predominate over residues 25–39 (GEQQQQQRASPARPS). The 149-residue stretch at 79 to 227 (YLEYSLLAEF…VVDSVKLCNS (149 aa)) folds into the UBC core domain. Residues 262-297 (KRRPEDHHKGLQVSGLSWVKPGSTQPFSKDDNPPQN) are disordered.

The protein belongs to the ubiquitin-conjugating enzyme family. FTS subfamily.

Its subcellular location is the cytoplasm. It localises to the cell membrane. Its function is as follows. May function to promote vesicle trafficking and/or fusion. May also regulate apoptosis. This is AKT-interacting protein (aktip) from Salmo salar (Atlantic salmon).